Here is a 213-residue protein sequence, read N- to C-terminus: mRNA-decapping protein D9 (213 aa).

The Nudix hydrolase domain occupies Lys-30 to Leu-209. The Nudix box signature appears at Gly-111–Asp-132. Glu-117 contacts Mg(2+). The Nucleophile role is filled by Glu-126. Glu-130 and Asp-151 together coordinate Mg(2+).

The protein belongs to the Nudix hydrolase family. Mg(2+) is required as a cofactor. Requires Mn(2+) as cofactor.

Decapping enzyme required for the removal of the 5'-end m7GpppN cap tethered to viral and host mRNAs to allow their decay in cells. May therefore accelerate viral and cellular mRNA turnover to eliminate competing host mRNAs and allow stage-specific synthesis of viral proteins. Acceleration of the turnover of cellular transcripts may even promote the shutoff of host protein synthesis. Does not cleave unmethylated RNAs or RNAs shorter than 24 nucleotides. This Homo sapiens (Human) protein is mRNA-decapping protein D9.